A 391-amino-acid polypeptide reads, in one-letter code: Zinc finger protein ubi-d4 (391 aa).

Position 2 is an N-acetylalanine (alanine 2). Glycyl lysine isopeptide (Lys-Gly) (interchain with G-Cter in SUMO2) cross-links involve residues lysine 10, lysine 99, lysine 107, and lysine 108. Disordered stretches follow at residues 79–147 (WRKK…GEFP) and 165–199 (DDLDDEDYEEDTPKRRGKGKSKSKGVSSARKKLDA). Basic and acidic residues-rich tracts occupy residues 100–110 (PDTDQTLKKEG) and 126–140 (DPLEKRGAPDPRVDD). The residue at position 142 (serine 142) is a Phosphoserine. Over residues 165-174 (DDLDDEDYEE) the composition is skewed to acidic residues. Residue tyrosine 172 is modified to Phosphotyrosine. Threonine 176 is modified (phosphothreonine). Glycyl lysine isopeptide (Lys-Gly) (interchain with G-Cter in SUMO2) cross-links involve residues lysine 178 and lysine 196. Serine 200 bears the Phosphoserine mark. Residues 209–232 (YACDICGKRYKNRPGLSYHYAHSH) form a C2H2-type zinc finger. The tract at residues 233–266 (LAEEEGEDKEDSRPPTPVSQRSEEQKSKKGPDGL) is disordered. Serine 244 carries the phosphoserine modification. Basic and acidic residues predominate over residues 253–263 (RSEEQKSKKGP). 2 consecutive PHD-type zinc fingers follow at residues 270 to 330 (NNYC…CKCC) and 327 to 377 (CKCC…CLDL). Serine 280 is subject to Phosphoserine. Lysine 281 participates in a covalent cross-link: Glycyl lysine isopeptide (Lys-Gly) (interchain with G-Cter in SUMO2).

This sequence belongs to the requiem/DPF family. Interacts with the nucleosomes, in particular nucleosomes bearing histone H3 crotonylated at 'Lys-14' (H3K14cr) for which DPF2 has high affinity. Also interacts (via PHD-type zinc finger domains) with histone H3 butyrylated at 'Lys-14' (H3K14bu), histone H3 propionylated at 'Lys-14' (H3K14pr), and histone H3 acetylated at 'Lys-14' (H3K14ac). Interacts with histone H3 acetylated at 'Lys-9' (H3K9ac), histone H3 di-methylated at 'Lys-9' (H3K9me2), and histone H3 tri-methylated at 'Lys-9' (H3K9me3). Interacts with histone H4 acetylated at 'Lys-12' (H4K12ac). Interacts with histone H4 acetylated at 'Lys-16' (H4K16ac). Interacts with SWI/SNF complex components. Interacts with SMARCA2, SMARCA4, SMARCB1 and SMARCD1. Interacts with SMARCC1, SMARCC2 and ACTL6A. Interacts with RUNX1. In terms of tissue distribution, in embryo, highest levels are seen in brain, eyes, thymus and olfactory epithelium in nose, whereas several other tissues, including the musculoskeletal system, show moderate expression. In adult, higher expression in testis, medium in thymus and spleen, lower in certain parts of the brain as the hippocampus. No expression in adult heart, lung, liver, duodenum and kidney.

The protein localises to the nucleus. Its subcellular location is the cytoplasm. Its function is as follows. Plays an active role in transcriptional regulation by binding modified histones H3 and H4. Is a negative regulator of myeloid differentiation of hematopoietic progenitor cells. Might also have a role in the development and maturation of lymphoid cells. Involved in the regulation of non-canonical NF-kappa-B pathway. This Mus musculus (Mouse) protein is Zinc finger protein ubi-d4 (Dpf2).